Reading from the N-terminus, the 376-residue chain is Gibberellic acid methyltransferase 1 (376 aa).

S-adenosyl-L-homocysteine-binding residues include Tyr-22, Cys-64, Asn-69, Asp-104, Leu-105, Ser-136, and Phe-137. Residue Trp-158 participates in gibberellin A9 binding. Asn-175, Val-179, Arg-265, Asp-266, Phe-268, and Asn-269 together coordinate Mg(2+).

This sequence belongs to the methyltransferase superfamily. Type-7 methyltransferase family. SABATH subfamily. Mg(2+) serves as cofactor. As to expression, expressed in siliques, developing seeds, anthers and germinating seeds. Not detected in leaves, stems, flowers and roots.

The enzyme catalyses gibberellin A9 + S-adenosyl-L-methionine = O-methyl gibberellin A9 + S-adenosyl-L-homocysteine. Up-regulated by K(+) and NH(4+), down-regulated by Zn(2+), Cu(2+), Fe(2+) and Fe(3+). Functionally, methylates the carboxyl group of several gibberellins (GAs). Substrate preference is GA9 &gt; GA20 &gt; GA3 &gt; GA4 &gt; GA34 &gt; GA51 &gt; GA1 &gt; GA19 &gt; GA12. No activity with diterpenes abietic acid and ent-kaurenoic acid. In Arabidopsis thaliana (Mouse-ear cress), this protein is Gibberellic acid methyltransferase 1 (GAMT1).